Here is a 336-residue protein sequence, read N- to C-terminus: Vacuolar protein sorting-associated protein 26B (336 aa).

S302, S304, and S319 each carry phosphoserine.

The protein belongs to the VPS26 family. In terms of assembly, component of the heterotrimeric retromer cargo-selective complex (CSC), also described as vacuolar protein sorting subcomplex (VPS), formed by VPS26 (VPS26A or VPS26B), VPS29 and VPS35. The CSC has a highly elongated structure with VPS26 and VPS29 binding independently at opposite distal ends of VPS35 as central platform. The CSC is believed to associate with variable sorting nexins to form functionally distinct retromer complex variants. The originally described SNX-BAR retromer is a pentamer containing the CSC and a heterodimeric membrane-deforming subcomplex formed between SNX1 or SNX2 and SNX5 or SNX6 (also called SNX-BAR subcomplex); the respective CSC and SNX-BAR subcomplexes associate with low affinity. The CSC associates with SNX3 to form a SNX3-retromer complex. The CSC associates with SNX27, the WASH complex and the SNX-BAR subcomplex to form the SNX27-retromer complex. Interacts with VPS29, VPS35, TBC1D5, GOLPH3, SNX27.

It localises to the cytoplasm. Its subcellular location is the membrane. The protein resides in the early endosome. The protein localises to the late endosome. Functionally, acts as a component of the retromer cargo-selective complex (CSC). The CSC is believed to be the core functional component of retromer or respective retromer complex variants acting to prevent missorting of selected transmembrane cargo proteins into the lysosomal degradation pathway. The recruitment of the CSC to the endosomal membrane involves RAB7A and SNX3. The SNX-BAR retromer mediates retrograde transport of cargo proteins from endosomes to the trans-Golgi network (TGN) and is involved in endosome-to-plasma membrane transport for cargo protein recycling. The SNX3-retromer mediates the retrograde transport of WLS distinct from the SNX-BAR retromer pathway. The SNX27-retromer is believed to be involved in endosome-to-plasma membrane trafficking and recycling of a broad spectrum of cargo proteins. The CSC seems to act as recruitment hub for other proteins, such as the WASH complex and TBC1D5. May be involved in retrograde transport of SORT1 but not of IGF2R. Acts redundantly with VSP26A in SNX-27 mediated endocytic recycling of SLC2A1/GLUT1. The chain is Vacuolar protein sorting-associated protein 26B (VPS26B) from Pongo abelii (Sumatran orangutan).